A 420-amino-acid chain; its full sequence is Ribulose bisphosphate carboxylase large chain (420 aa).

Substrate is bound by residues Asn103 and Thr153. Lys155 serves as the catalytic Proton acceptor. A substrate-binding site is contributed by Lys157. Mg(2+) contacts are provided by Lys181, Asp183, and Glu184. Lys181 is subject to N6-carboxylysine. Residue His274 is the Proton acceptor of the active site. Substrate-binding residues include Arg275, His307, and Ser359.

This sequence belongs to the RuBisCO large chain family. Type I subfamily. As to quaternary structure, heterohexadecamer of 8 large chains and 8 small chains; disulfide-linked. The disulfide link is formed within the large subunit homodimers. Mg(2+) is required as a cofactor. The disulfide bond which can form in the large chain dimeric partners within the hexadecamer appears to be associated with oxidative stress and protein turnover.

The protein localises to the plastid. Its subcellular location is the chloroplast. The catalysed reaction is 2 (2R)-3-phosphoglycerate + 2 H(+) = D-ribulose 1,5-bisphosphate + CO2 + H2O. It catalyses the reaction D-ribulose 1,5-bisphosphate + O2 = 2-phosphoglycolate + (2R)-3-phosphoglycerate + 2 H(+). In terms of biological role, ruBisCO catalyzes two reactions: the carboxylation of D-ribulose 1,5-bisphosphate, the primary event in carbon dioxide fixation, as well as the oxidative fragmentation of the pentose substrate in the photorespiration process. Both reactions occur simultaneously and in competition at the same active site. In Anemia mexicana (Mexican fern), this protein is Ribulose bisphosphate carboxylase large chain.